A 290-amino-acid polypeptide reads, in one-letter code: Oxaloacetate decarboxylase (290 aa).

S53 provides a ligand contact to substrate. Mg(2+) is bound at residue D91. Substrate is bound by residues R162 and H238.

Belongs to the isocitrate lyase/PEP mutase superfamily. Oxaloacetate decarboxylase family. In terms of assembly, homotetramer; dimer of dimers. Mg(2+) is required as a cofactor.

The catalysed reaction is oxaloacetate + H(+) = pyruvate + CO2. Its function is as follows. Catalyzes the decarboxylation of oxaloacetate into pyruvate. Seems to play a role in maintaining cellular concentrations of bicarbonate and pyruvate. This chain is Oxaloacetate decarboxylase, found in Ectopseudomonas mendocina (strain ymp) (Pseudomonas mendocina).